Reading from the N-terminus, the 158-residue chain is MAETVEVLVPGGRATAGPPIGPALGPLGINVKAVVDDINKKTAEFNGMQVPVKIEVDDKKNVTISVGIPPTTALVMKEVGIEKGSAEPNSIIVGDLPIEAAVRIARMKLDDMLSYELKTAVKEVIGTCVSVGVTVDGKKPKEILAAISAGQYDSVLEA.

It belongs to the universal ribosomal protein uL11 family. As to quaternary structure, part of the ribosomal stalk of the 50S ribosomal subunit. Interacts with L10 and the large rRNA to form the base of the stalk. L10 forms an elongated spine to which L12 dimers bind in a sequential fashion forming a multimeric L10(L12)X complex.

Forms part of the ribosomal stalk which helps the ribosome interact with GTP-bound translation factors. This Methanosphaerula palustris (strain ATCC BAA-1556 / DSM 19958 / E1-9c) protein is Large ribosomal subunit protein uL11.